The sequence spans 121 residues: Small ribosomal subunit protein bS6 (121 aa).

This sequence belongs to the bacterial ribosomal protein bS6 family.

Functionally, binds together with bS18 to 16S ribosomal RNA. This Rickettsia canadensis (strain McKiel) protein is Small ribosomal subunit protein bS6.